The primary structure comprises 403 residues: Phosphoglycerate kinase (403 aa).

Substrate-binding positions include 24–26, arginine 39, 62–65, arginine 121, and arginine 161; these read DLN and HLGR. Residues lysine 211, glycine 299, glutamate 330, and 359–362 contribute to the ATP site; that span reads GGDS.

It belongs to the phosphoglycerate kinase family. In terms of assembly, monomer.

It localises to the cytoplasm. The enzyme catalyses (2R)-3-phosphoglycerate + ATP = (2R)-3-phospho-glyceroyl phosphate + ADP. It functions in the pathway carbohydrate degradation; glycolysis; pyruvate from D-glyceraldehyde 3-phosphate: step 2/5. The sequence is that of Phosphoglycerate kinase from Rhodococcus opacus (strain B4).